Reading from the N-terminus, the 797-residue chain is Methionine--tRNA ligase, cytoplasmic (797 aa).

Positions 26 to 36 (PYVNNVPHLGN) match the 'HIGH' region motif. The 'KMSKS' region motif lies at 348–352 (KFSKS). Position 351 (Lys-351) interacts with ATP. A disordered region spans residues 601-634 (DQLNKTKLSDAKKQKASSKGGGKPKPQPAADREI). The tRNA-binding domain maps to 635-738 (TMARLDIRVG…KTANIGERVT (104 aa)).

This sequence belongs to the class-I aminoacyl-tRNA synthetase family.

The protein resides in the cytoplasm. Its subcellular location is the cytosol. It catalyses the reaction tRNA(Met) + L-methionine + ATP = L-methionyl-tRNA(Met) + AMP + diphosphate. The polypeptide is Methionine--tRNA ligase, cytoplasmic (Arabidopsis thaliana (Mouse-ear cress)).